The chain runs to 175 residues: CDP-archaeol synthase (175 aa).

A run of 4 helical transmembrane segments spans residues 41 to 61, 82 to 102, 122 to 142, and 150 to 170; these read GLFSGIFCGFIAGCIEIWLSS, LIVVLALASGALFGDMFKSFF, FVVGAWVFTYLVAPEWFVSNF, and VIIITPLLHLTTNIIGYLIGV.

The protein belongs to the CDP-archaeol synthase family. Mg(2+) is required as a cofactor.

It localises to the cell membrane. It catalyses the reaction 2,3-bis-O-(geranylgeranyl)-sn-glycerol 1-phosphate + CTP + H(+) = CDP-2,3-bis-O-(geranylgeranyl)-sn-glycerol + diphosphate. The protein operates within membrane lipid metabolism; glycerophospholipid metabolism. Functionally, catalyzes the formation of CDP-2,3-bis-(O-geranylgeranyl)-sn-glycerol (CDP-archaeol) from 2,3-bis-(O-geranylgeranyl)-sn-glycerol 1-phosphate (DGGGP) and CTP. This reaction is the third ether-bond-formation step in the biosynthesis of archaeal membrane lipids. The protein is CDP-archaeol synthase of Methanosarcina barkeri (strain Fusaro / DSM 804).